The sequence spans 165 residues: Chorismate pyruvate-lyase (165 aa).

Positions 35, 77, 115, and 156 each coordinate substrate.

This sequence belongs to the UbiC family. Monomer.

It localises to the cytoplasm. The catalysed reaction is chorismate = 4-hydroxybenzoate + pyruvate. It participates in cofactor biosynthesis; ubiquinone biosynthesis. Functionally, removes the pyruvyl group from chorismate, with concomitant aromatization of the ring, to provide 4-hydroxybenzoate (4HB) for the ubiquinone pathway. The chain is Chorismate pyruvate-lyase from Escherichia coli O7:K1 (strain IAI39 / ExPEC).